A 433-amino-acid polypeptide reads, in one-letter code: G-protein coupled receptor 22 (433 aa).

Over 1–45 (MCFSPILEINMQSESNITVRDDIDDINTNMYQPLSYPLSFQVSLT) the chain is Extracellular. The N-linked (GlcNAc...) asparagine glycan is linked to Asn16. A helical membrane pass occupies residues 46 to 66 (GFLMLEIVLGLGSNLTVLVLY). Residues 67-85 (CMKSNLINSVSNIITMNLH) lie on the Cytoplasmic side of the membrane. Residues 86-106 (VLDVIICVGCIPLTIVILLLS) traverse the membrane as a helical segment. Residues 107–115 (LESNTALIC) lie on the Extracellular side of the membrane. The chain crosses the membrane as a helical span at residues 116-136 (CFHEACVSFASVSTAINVFAI). The Cytoplasmic portion of the chain corresponds to 137–156 (TLDRYDISVKPANRILTMGR). Residues 157–177 (AVMLMISIWIFSFFSFLIPFI) form a helical membrane-spanning segment. The Extracellular portion of the chain corresponds to 178 to 208 (EVNFFSLQSGNTWENKTLLCVSTNEYYTELG). A glycan (N-linked (GlcNAc...) asparagine) is linked at Asn192. A helical membrane pass occupies residues 209–229 (MYYHLLVQIPIFFFTVVVMLI). The Cytoplasmic segment spans residues 230-315 (TYTKILQALN…ERQKRVFRMS (86 aa)). The helical transmembrane segment at 316-336 (LLIISTFLLCWTPISVLNTTI) threads the bilayer. Over 337–349 (LCLGPSDLLVKLR) the chain is Extracellular. Residues 350-370 (LCFLVMAYGTTIFHPLLYAFT) traverse the membrane as a helical segment. Topologically, residues 371–433 (RQKFQKVLKS…KCLVPQVVTD (63 aa)) are cytoplasmic.

The protein belongs to the G-protein coupled receptor 1 family. In terms of tissue distribution, high expression in adult and fetal heart tissue. Expressed in the brain, with enrichment in the accumbens, amygdala, cerebellum, cortex, and hippocampus regions.

It is found in the cell membrane. In terms of biological role, orphan G-protein coupled receptor. Seems to act through a G(i)/G(o) mediated pathway. May be involved in ciliogenesis. The polypeptide is G-protein coupled receptor 22 (Homo sapiens (Human)).